The chain runs to 222 residues: Oligoribonuclease (222 aa).

Positions 19 to 38 (PMASSSSTGKQEESVNGSLE) are disordered. Residues 21–35 (ASSSSTGKQEESVNG) are compositionally biased toward polar residues. An Exonuclease domain is found at 46-210 (LVWIDLEMTG…DDIRESIKEL (165 aa)). Residue His167 is part of the active site.

It belongs to the oligoribonuclease family.

Its function is as follows. 3'-to-5' exoribonuclease specific for small oligoribonucleotides. The sequence is that of Oligoribonuclease from Arabidopsis thaliana (Mouse-ear cress).